A 671-amino-acid polypeptide reads, in one-letter code: MEPIEQQLTELRTTLRHHEYLYHVMDAPEIPDAEYDRLMRELRELEAQRPDLITPDSPTQRVGAAPLTAFNQIRHEVPMLSLDNVFDEESFLAFNKRVQDRLKSTENVIWCCELKLDGLAVSILYENGVLVSAATRGDGTTGEDITSNVRTIRAIPLKLHGDNIPARLEVRGEVFLPQAGFEKINEDARRTGGKVFANPRNAAAGSLRQLDPRITAKRPLTFFCYGVGILEGGELPDTHLGRLLQFKAWGLPVSDRVTLCDSPQAVLDFYRNVEKDRPTLGFDIDGVVIKVNSLALQEQLGFVARAPRWAVAFKFPAQEQMTFVRDVEFQVGRTGAITPVARLEPVQVAGVLVSNATLHNADEIERLGLRIGDKVVIRRAGDVIPQVVNVVLSERPEETRPIVFPTHCPVCGSDVERVEGEAVTRCTGGLICGAQRKESLKHFVSRRAMDVDGMGDKIIDQLVEREYVHTPADLFRLTAGKLTGLDRMGPKSAQNVVNALEKAKATTFARFLYALGIREVGEATAAGLAAYFGTLEALQTATIDELQKVPDVGIVVATHVFNFFAEESNRDVIGQLLAEGVHWPAPVVINVQEIDSPFAGKTVVLTGSLSQMSRDDAKARLAALGAKVAGSVSKKTDLVIAGEAAGSKLAKAQELGITVIDEAEMIRLLGA.

Residues 32–36 (DAEYD), 81–82 (SL), and E113 contribute to the NAD(+) site. K115 functions as the N6-AMP-lysine intermediate in the catalytic mechanism. Residues R136, E173, K290, and K314 each contribute to the NAD(+) site. Zn(2+) is bound by residues C408, C411, C426, and C432. Positions 593–671 (EIDSPFAGKT…EAEMIRLLGA (79 aa)) constitute a BRCT domain.

This sequence belongs to the NAD-dependent DNA ligase family. LigA subfamily. Requires Mg(2+) as cofactor. Mn(2+) serves as cofactor.

It catalyses the reaction NAD(+) + (deoxyribonucleotide)n-3'-hydroxyl + 5'-phospho-(deoxyribonucleotide)m = (deoxyribonucleotide)n+m + AMP + beta-nicotinamide D-nucleotide.. Its function is as follows. DNA ligase that catalyzes the formation of phosphodiester linkages between 5'-phosphoryl and 3'-hydroxyl groups in double-stranded DNA using NAD as a coenzyme and as the energy source for the reaction. It is essential for DNA replication and repair of damaged DNA. The chain is DNA ligase from Salmonella heidelberg (strain SL476).